We begin with the raw amino-acid sequence, 283 residues long: Elongation factor Ts (283 aa).

The tract at residues 80 to 83 is involved in Mg(2+) ion dislocation from EF-Tu; that stretch reads TDFV.

This sequence belongs to the EF-Ts family.

The protein resides in the cytoplasm. Associates with the EF-Tu.GDP complex and induces the exchange of GDP to GTP. It remains bound to the aminoacyl-tRNA.EF-Tu.GTP complex up to the GTP hydrolysis stage on the ribosome. The polypeptide is Elongation factor Ts (Histophilus somni (strain 129Pt) (Haemophilus somnus)).